The sequence spans 247 residues: MNIIPCSIKTLKGLYDISGVEVGQHFYWQIGSFQIHAQVLITSWVVITILLGSVVIAVRNPQTVPMDGQNFFEYVLEFIRDLSKTQIGEEYGPWVPFIGTMFLFIFVSNWSGALLPWKIIELPHGELAAPTNDINTTVALALLTSAAYFYAGLSKKGLSYFEKYIKPTPILLPINILEDFTKPLSLSFRLFGNILADELVVVVLVSLVPLVVPIPVMFLGLFTSGIQALIFATLAAAYIGESMEGHH.

5 helical membrane-spanning segments follow: residues Gln38–Val58, Val95–Leu115, Ile134–Ser154, Leu199–Leu219, and Gly220–Gly240.

Belongs to the ATPase A chain family. As to quaternary structure, F-type ATPases have 2 components, CF(1) - the catalytic core - and CF(0) - the membrane proton channel. CF(1) has five subunits: alpha(3), beta(3), gamma(1), delta(1), epsilon(1). CF(0) has four main subunits: a, b, b' and c.

Its subcellular location is the plastid. The protein localises to the chloroplast thylakoid membrane. Key component of the proton channel; it plays a direct role in the translocation of protons across the membrane. In Lolium perenne (Perennial ryegrass), this protein is ATP synthase subunit a, chloroplastic.